Reading from the N-terminus, the 413-residue chain is Gamma-glutamyl phosphate reductase (413 aa).

It belongs to the gamma-glutamyl phosphate reductase family.

Its subcellular location is the cytoplasm. It carries out the reaction L-glutamate 5-semialdehyde + phosphate + NADP(+) = L-glutamyl 5-phosphate + NADPH + H(+). It functions in the pathway amino-acid biosynthesis; L-proline biosynthesis; L-glutamate 5-semialdehyde from L-glutamate: step 2/2. In terms of biological role, catalyzes the NADPH-dependent reduction of L-glutamate 5-phosphate into L-glutamate 5-semialdehyde and phosphate. The product spontaneously undergoes cyclization to form 1-pyrroline-5-carboxylate. The chain is Gamma-glutamyl phosphate reductase from Thermus thermophilus (strain ATCC 27634 / DSM 579 / HB8).